Reading from the N-terminus, the 302-residue chain is Deoxyhypusine hydroxylase-B (302 aa).

HEAT-like PBS-type repeat units follow at residues 49-75, 82-108, 171-200, 204-230, and 237-263; these read LAHE…VLKD, VRHE…SLAV, MYER…LGVK, LRHE…VLKN, and VRHE…FAKD. Fe cation-binding residues include His51, Glu52, His84, and Glu85. Residues His206, Glu207, His239, and Glu240 each coordinate Fe cation.

Belongs to the deoxyhypusine hydroxylase family. It depends on Fe(2+) as a cofactor.

The enzyme catalyses [eIF5A protein]-deoxyhypusine + AH2 + O2 = [eIF5A protein]-hypusine + A + H2O. It participates in protein modification; eIF5A hypusination. Functionally, catalyzes the hydroxylation of the N(6)-(4-aminobutyl)-L-lysine intermediate to form hypusine, an essential post-translational modification only found in mature eIF-5A factor. This Oryza sativa subsp. japonica (Rice) protein is Deoxyhypusine hydroxylase-B.